The chain runs to 369 residues: 4-hydroxy-3-methylbut-2-en-1-yl diphosphate synthase (flavodoxin) (369 aa).

[4Fe-4S] cluster-binding residues include cysteine 270, cysteine 273, cysteine 305, and glutamate 312.

Belongs to the IspG family. Requires [4Fe-4S] cluster as cofactor.

The catalysed reaction is (2E)-4-hydroxy-3-methylbut-2-enyl diphosphate + oxidized [flavodoxin] + H2O + 2 H(+) = 2-C-methyl-D-erythritol 2,4-cyclic diphosphate + reduced [flavodoxin]. It participates in isoprenoid biosynthesis; isopentenyl diphosphate biosynthesis via DXP pathway; isopentenyl diphosphate from 1-deoxy-D-xylulose 5-phosphate: step 5/6. Functionally, converts 2C-methyl-D-erythritol 2,4-cyclodiphosphate (ME-2,4cPP) into 1-hydroxy-2-methyl-2-(E)-butenyl 4-diphosphate. This is 4-hydroxy-3-methylbut-2-en-1-yl diphosphate synthase (flavodoxin) from Pseudomonas putida (strain GB-1).